We begin with the raw amino-acid sequence, 87 residues long: MVKNSVISVIFQEEKKGSVEFQVFNFTNKIRRLTSHLELHKKDYLSQRGLKKILGKRQRLLAYLAKKNRVRYKELINQLDIRETKTH.

This sequence belongs to the universal ribosomal protein uS15 family. Part of the 30S ribosomal subunit.

The protein localises to the plastid. It localises to the chloroplast. This chain is Small ribosomal subunit protein uS15c (rps15), found in Solanum bulbocastanum (Wild potato).